We begin with the raw amino-acid sequence, 480 residues long: UDP-N-acetylmuramoylalanine--D-glutamate ligase (480 aa).

127–133 serves as a coordination point for ATP; sequence GTNGKTT.

This sequence belongs to the MurCDEF family.

The protein resides in the cytoplasm. The catalysed reaction is UDP-N-acetyl-alpha-D-muramoyl-L-alanine + D-glutamate + ATP = UDP-N-acetyl-alpha-D-muramoyl-L-alanyl-D-glutamate + ADP + phosphate + H(+). It functions in the pathway cell wall biogenesis; peptidoglycan biosynthesis. Functionally, cell wall formation. Catalyzes the addition of glutamate to the nucleotide precursor UDP-N-acetylmuramoyl-L-alanine (UMA). In Tropheryma whipplei (strain Twist) (Whipple's bacillus), this protein is UDP-N-acetylmuramoylalanine--D-glutamate ligase.